Consider the following 293-residue polypeptide: Acetylglutamate kinase (293 aa).

Residues 68 to 69 (GG), Arg90, and Asn189 contribute to the substrate site.

It belongs to the acetylglutamate kinase family. ArgB subfamily.

Its subcellular location is the cytoplasm. The catalysed reaction is N-acetyl-L-glutamate + ATP = N-acetyl-L-glutamyl 5-phosphate + ADP. The protein operates within amino-acid biosynthesis; L-arginine biosynthesis; N(2)-acetyl-L-ornithine from L-glutamate: step 2/4. Functionally, catalyzes the ATP-dependent phosphorylation of N-acetyl-L-glutamate. The protein is Acetylglutamate kinase of Mycobacterium marinum (strain ATCC BAA-535 / M).